The chain runs to 750 residues: MSGNHTPSASGPFSALTPSIWPQEILAKYSQKEESSEQPELCYDEFGFRVDKEGSEPGCSQMTGSPLVEDPPQRLRWQAHLEFTHNHDVGDLTWDKIAVSLPRSEKLRSLVLAGIPHGMRPQLWMRLSGALQKKKNSELSYREIIKNSSNDETIAAKQIEKDLLRTMPSNACFANVNSIGVPRLRRVLRALAWLYPEIGYCQGTGMVAACLLLFLEEEDAFWMMCAIIEDLLPASYFSTTLLGVQTDQRVLRHLIVQYLPRLDKLLQEHDIELSLITLHWFLTAFASVVHIRLLLRIWDLFFYEGSLVLFQTTLGMLRLKEEELIQSENSASIFNTLSDIPAQMDDAELLLGEAMRLAGSLTDVAVETQRRKHLAYLIADQGQTLGTGTTTNLSQVVRRRTQRRKSGITSLLFGEDDLEALKAKNIKQTELVADLREAILRVARHFQCTDPKNCSVELTPDYSMESHQRDHENYVACLRSHRRRAKALLDFERHDDDELGFRKNDIITIISQKDEHCWVGELNGLRGWFPAKFVEVLDERSKEYSIAGDDSVTEGVTDLVRGTLCPALKALFEHGLKKPSLLGGACHPWLFIEEAAGREVERDFDSVYSRLVLCKTYRLDEDGKVLTPEELLYRAVQSVNVTHDAAHAQMDVKLRSLICVGLNEQVLHLWLEVLCSSLPTVEKWYQPWSFLRSPGWVQIKCELRVLCCFAFSLSQDWELPARREEEKQPLKEGVQDMLVKHHLFSWDIDG.

Residues 114–305 (GIPHGMRPQL…RIWDLFFYEG (192 aa)) form the Rab-GAP TBC domain. Position 406 is a phosphoserine (Ser-406). Residues 415-439 (EDDLEALKAKNIKQTELVADLREAI) are a coiled coil. The region spanning 480–539 (SHRRRAKALLDFERHDDDELGFRKNDIITIISQKDEHCWVGELNGLRGWFPAKFVEVLDE) is the SH3 domain. The RUN domain maps to 555–718 (GVTDLVRGTL…FAFSLSQDWE (164 aa)).

Belongs to the small G protein signaling modulator family. In terms of assembly, interacts with GJA1. Interaction with GJA1 induces its degradation. Interacts via its RUN domain with the C-terminal region of NF2. Interacts with RAB3A, RAB4A, RAB5A, RAB8A, RAB11A, RAP1A, RAP1B, RAP2A, RAP2B and PDCD6I. No interaction with RAB27A. As to expression, widely expressed.

Its subcellular location is the cytoplasm. Functionally, may play a cooperative role in NF2-mediated growth suppression of cells. The polypeptide is Small G protein signaling modulator 3 (Mus musculus (Mouse)).